The chain runs to 199 residues: NAD(P)H dehydrogenase (quinone) (199 aa).

Residues 4–190 enclose the Flavodoxin-like domain; that stretch reads VLVLYYSAYG…AGARYQGRRV (187 aa). Residues 10 to 15 and 78 to 80 each bind FMN; these read SAYGHI and TRF. Tyr-12 lines the NAD(+) pocket. Trp-98 is a substrate binding site. FMN contacts are provided by residues 113-119 and His-134; that span reads STATQHG.

This sequence belongs to the WrbA family. It depends on FMN as a cofactor.

The catalysed reaction is a quinone + NADH + H(+) = a quinol + NAD(+). The enzyme catalyses a quinone + NADPH + H(+) = a quinol + NADP(+). This is NAD(P)H dehydrogenase (quinone) from Methylocella silvestris (strain DSM 15510 / CIP 108128 / LMG 27833 / NCIMB 13906 / BL2).